A 337-amino-acid polypeptide reads, in one-letter code: Glyceraldehyde-3-phosphate dehydrogenase (337 aa).

Residues 12–13 (RI), Asp36, Arg80, and Ser122 contribute to the NAD(+) site. D-glyceraldehyde 3-phosphate contacts are provided by residues 153–155 (SCT) and Thr184. The active-site Nucleophile is the Cys154. Asn185 serves as a coordination point for NAD(+). D-glyceraldehyde 3-phosphate is bound by residues Arg199, 212–213 (TG), and Arg235. Asn318 is an NAD(+) binding site.

Belongs to the glyceraldehyde-3-phosphate dehydrogenase family. In terms of assembly, homotetramer.

It localises to the cytoplasm. It catalyses the reaction D-glyceraldehyde 3-phosphate + phosphate + NAD(+) = (2R)-3-phospho-glyceroyl phosphate + NADH + H(+). The protein operates within carbohydrate degradation; glycolysis; pyruvate from D-glyceraldehyde 3-phosphate: step 1/5. Catalyzes the oxidative phosphorylation of glyceraldehyde 3-phosphate (G3P) to 1,3-bisphosphoglycerate (BPG) using the cofactor NAD. The first reaction step involves the formation of a hemiacetal intermediate between G3P and a cysteine residue, and this hemiacetal intermediate is then oxidized to a thioester, with concomitant reduction of NAD to NADH. The reduced NADH is then exchanged with the second NAD, and the thioester is attacked by a nucleophilic inorganic phosphate to produce BPG. The polypeptide is Glyceraldehyde-3-phosphate dehydrogenase (gap) (Zymomonas mobilis subsp. mobilis (strain ATCC 31821 / ZM4 / CP4)).